Consider the following 548-residue polypeptide: Natural resistance-associated macrophage protein 1 (548 aa).

The segment covering 1 to 12 has biased composition (polar residues); the sequence is MSGDTGTPNQGG. Residues 1–38 form a disordered region; the sequence is MSGDTGTPNQGGTRYGSISSPPSPGPQQAPPGGTYLSE. The Cytoplasmic portion of the chain corresponds to 1–55; sequence MSGDTGTPNQGGTRYGSISSPPSPGPQQAPPGGTYLSEKIPIPDTESGAFSLRKL. Residues 56 to 73 traverse the membrane as a helical segment; sequence WAFTGPGFLMSIAFLDPG. At 74–82 the chain is on the extracellular side; it reads NIESDLQAG. The helical transmembrane segment at 83–102 threads the bilayer; the sequence is AVAGFKLLWVLLWATVLGLL. The Cytoplasmic portion of the chain corresponds to 103-139; that stretch reads CQRLAARLGVVTGKDLGEVCHLYYPKVPRTLLWLTIE. Residues 140–160 traverse the membrane as a helical segment; it reads LAIVGSDMQEVIGTAIAFSLL. At 161-164 the chain is on the extracellular side; it reads SAGR. Residues 165–184 traverse the membrane as a helical segment; it reads IPLWGGVLITIVDTFFFLFL. Residues 185–193 are Cytoplasmic-facing; the sequence is DNYGLRKLE. A helical transmembrane segment spans residues 194–214; the sequence is AFFGFLITIMALTFGYEYVVA. Residues 215-237 lie on the Extracellular side of the membrane; the sequence is RPAQGALLQGLFLPSCPGCGQPE. A helical transmembrane segment spans residues 238-256; that stretch reads LLQAVGIVGAIIMPHNIYL. At 257 to 284 the chain is on the cytoplasmic side; the sequence is HSSLVKSREVDRSRRADIREANMYFLIE. Residues 285 to 304 traverse the membrane as a helical segment; sequence ATIALSVSFFINLFVMAVFG. The Extracellular segment spans residues 305–346; that stretch reads QAFYKQTNQAAFNICANSSLHDYATIFPRDNLTVAVDIYQGG. 2 N-linked (GlcNAc...) asparagine glycosylation sites follow: N321 and N335. The chain crosses the membrane as a helical span at residues 347–366; that stretch reads VILGCLFGPAALYIWAVGLL. Topologically, residues 367–397 are cytoplasmic; that stretch reads AAGQSSTMTGTYAGQFVMEGFLKLRWSRFAR. Residues 398–415 traverse the membrane as a helical segment; the sequence is VLLTRSCAIPPTVLLAVF. Over 416–426 the chain is Extracellular; that stretch reads RDLQDLSGLND. A helical membrane pass occupies residues 427-447; that stretch reads LLNVLQSLLLPFAVLPILTFT. The Cytoplasmic segment spans residues 448-463; it reads SMPALMQEFANGLVSK. A helical membrane pass occupies residues 464–485; the sequence is IITSSIMVLVCAVNLYFVISYV. Residues 486-493 are Extracellular-facing; sequence PSLPHPAY. A helical transmembrane segment spans residues 494–513; sequence FSLVALLAAAYLGLTTYLVW. Residues 514–548 are Cytoplasmic-facing; the sequence is TCLITQGATRLAHSSHQRFLYGLPGEDQEEGRTSG.

This sequence belongs to the NRAMP family.

It localises to the late endosome membrane. The protein localises to the lysosome membrane. It catalyses the reaction Zn(2+)(in) + H(+)(out) = Zn(2+)(out) + H(+)(in). The catalysed reaction is Fe(2+)(in) + H(+)(out) = Fe(2+)(out) + H(+)(in). The enzyme catalyses Mn(2+)(in) + H(+)(out) = Mn(2+)(out) + H(+)(in). Macrophage-specific antiporter that fluxes metal ions in either direction against a proton gradient. Localized to late endosomal lysosomal membranes, delivers bivalent cations from the cytosol into these acidic compartments where they may directly affect antimicrobial activity. Involved in iron metabolism and host natural resistance to infection with intracellular parasites. Pathogen resistance involves sequestration of Fe(2+) and Mn(2+), cofactors of both prokaryotic and eukaryotic catalases and superoxide dismutases, not only to protect the macrophage against its own generation of reactive oxygen species, but to deny the cations to the pathogen for synthesis of its protective enzymes. In Ovis aries (Sheep), this protein is Natural resistance-associated macrophage protein 1 (SLC11A1).